Here is a 436-residue protein sequence, read N- to C-terminus: Citrate synthase (436 aa).

Residues His-313 and Asp-371 contribute to the active site.

It belongs to the citrate synthase family. Homohexamer.

The catalysed reaction is oxaloacetate + acetyl-CoA + H2O = citrate + CoA + H(+). Its pathway is carbohydrate metabolism; tricarboxylic acid cycle; isocitrate from oxaloacetate: step 1/2. This is Citrate synthase (aarA) from Acetobacter aceti.